A 232-amino-acid chain; its full sequence is Histone H1A (232 aa).

Positions 1-18 (MSDPAVEVTPAVPVASPA) are enriched in low complexity. Disordered regions lie at residues 1–42 (MSDP…THLP) and 98–232 (LQTK…AKKA). The H15 domain occupies 39-113 (THLPVSDMVV…GASGSFKLPA (75 aa)). Composition is skewed to basic residues over residues 131–141 (KPKKAAAPKPK), 147–173 (KVKKTIAKKPKAATATKIKKPVAKTTK), 181–214 (AAKKAAPKPKAAPKPKAAKKETKPKKAAAPKAKK), and 222–232 (KAAKKPAAKKA).

This sequence belongs to the histone H1/H5 family.

Its subcellular location is the nucleus. The protein resides in the chromosome. In terms of biological role, histones H1 are necessary for the condensation of nucleosome chains into higher-order structures. This is Histone H1A from Chironomus tentans (Midge).